Reading from the N-terminus, the 66-residue chain is Beta-mammal toxin Cv1 (66 aa).

Residues K1–N66 form the LCN-type CS-alpha/beta domain. Intrachain disulfides connect C12–C65, C16–C41, C25–C46, and C29–C48.

Expressed by the venom gland.

The protein resides in the secreted. Is susceptible to be neutralized by human antibodies scFvs 10FG2 and HV. Its function is as follows. Beta toxins bind voltage-independently at site-4 of sodium channels (Nav) and reduces peak current and shifts the voltage of activation toward more negative potentials thereby affecting sodium channel activation and promoting spontaneous and repetitive firing. This toxin is slightly toxic to mice. In Centruroides villegasi (Scorpion), this protein is Beta-mammal toxin Cv1.